A 131-amino-acid chain; its full sequence is Large ribosomal subunit protein bL17 (131 aa).

Belongs to the bacterial ribosomal protein bL17 family. As to quaternary structure, part of the 50S ribosomal subunit. Contacts protein L32.

This is Large ribosomal subunit protein bL17 from Shewanella amazonensis (strain ATCC BAA-1098 / SB2B).